The chain runs to 408 residues: Exo-alpha-sialidase ARB_03431 (408 aa).

The signal sequence occupies residues 1-22; the sequence is MGIKQWLLSLVVVAISATATQA. Substrate contacts are provided by Arg62, Arg81, Asp87, and Gln150. Asn237 is a glycosylation site (N-linked (GlcNAc...) asparagine). Substrate-binding positions include Arg267, Arg324, 324–325, 333–334, Lys339, Tyr360, Asp378, and 378–380; these read RT, YD, and DWY. Asn398 is a glycosylation site (N-linked (GlcNAc...) asparagine).

This sequence belongs to the glycosyl hydrolase 33 family.

Its subcellular location is the secreted. The catalysed reaction is Hydrolysis of alpha-(2-&gt;3)-, alpha-(2-&gt;6)-, alpha-(2-&gt;8)- glycosidic linkages of terminal sialic acid residues in oligosaccharides, glycoproteins, glycolipids, colominic acid and synthetic substrates.. Sialidase is able to release sialic acid from a wide variety of natural substrates. The sequence is that of Exo-alpha-sialidase ARB_03431 from Arthroderma benhamiae (strain ATCC MYA-4681 / CBS 112371) (Trichophyton mentagrophytes).